The chain runs to 388 residues: tRNA (guanine(26)-N(2))-dimethyltransferase (388 aa).

A Trm1 methyltransferase domain is found at 4 to 383 (RTIVEGTTKI…APIAEIKKII (380 aa)). 4 residues coordinate S-adenosyl-L-methionine: R41, R78, D94, and A123. Positions 251, 254, 271, and 274 each coordinate Zn(2+).

Belongs to the class I-like SAM-binding methyltransferase superfamily. Trm1 family.

The catalysed reaction is guanosine(26) in tRNA + 2 S-adenosyl-L-methionine = N(2)-dimethylguanosine(26) in tRNA + 2 S-adenosyl-L-homocysteine + 2 H(+). In terms of biological role, dimethylates a single guanine residue at position 26 of a number of tRNAs using S-adenosyl-L-methionine as donor of the methyl groups. The protein is tRNA (guanine(26)-N(2))-dimethyltransferase of Methanosarcina acetivorans (strain ATCC 35395 / DSM 2834 / JCM 12185 / C2A).